The chain runs to 337 residues: MNKQDFYFDLPSELIAQYPLANRSDSRLLIYNRQTEEYGHYQFREIADFLQPGDLLVMNDSKVIPARLYGHKATGGKVELLVERITGDFTFLAHIKASKSLKSNDFIYLDAGKRLEVLERQDDLFLCKASENILDLLNDLGHIPLPPYIAREDESLDKERYQTVYAKCAGSVAAPTAGLHFDDAVLSSIRARGVNIAYVTLHVGAGTFRPVRCERIQDHKMHSEWFTVSPDLCAAVKAAKSMGNRVIAVGTTALRSLESAAMGGELIPCSRDTDIFIYPGYQFKVCDGLITNFHLPESTLVMLVSAFIGHQECMALYQEAIDKRYRFFSYGDASLLL.

Belongs to the QueA family. In terms of assembly, monomer.

The protein resides in the cytoplasm. It carries out the reaction 7-aminomethyl-7-carbaguanosine(34) in tRNA + S-adenosyl-L-methionine = epoxyqueuosine(34) in tRNA + adenine + L-methionine + 2 H(+). It participates in tRNA modification; tRNA-queuosine biosynthesis. Functionally, transfers and isomerizes the ribose moiety from AdoMet to the 7-aminomethyl group of 7-deazaguanine (preQ1-tRNA) to give epoxyqueuosine (oQ-tRNA). This chain is S-adenosylmethionine:tRNA ribosyltransferase-isomerase, found in Legionella pneumophila (strain Corby).